A 216-amino-acid polypeptide reads, in one-letter code: Probable RNA 2'-phosphotransferase 2 (216 aa).

It belongs to the KptA/TPT1 family.

Removes the 2'-phosphate from RNA via an intermediate in which the phosphate is ADP-ribosylated by NAD followed by a presumed transesterification to release the RNA and generate ADP-ribose 1''-2''-cyclic phosphate (APPR&gt;P). May function as an ADP-ribosylase. This chain is Probable RNA 2'-phosphotransferase 2 (kptA2), found in Archaeoglobus fulgidus (strain ATCC 49558 / DSM 4304 / JCM 9628 / NBRC 100126 / VC-16).